We begin with the raw amino-acid sequence, 124 residues long: Small ribosomal subunit protein uS13 (124 aa).

Residues 96 to 124 (LPVRGQRTKTNARTRKGPRRTVAGKKKAK) form a disordered region.

Belongs to the universal ribosomal protein uS13 family. As to quaternary structure, part of the 30S ribosomal subunit. Forms a loose heterodimer with protein S19. Forms two bridges to the 50S subunit in the 70S ribosome.

Its function is as follows. Located at the top of the head of the 30S subunit, it contacts several helices of the 16S rRNA. In the 70S ribosome it contacts the 23S rRNA (bridge B1a) and protein L5 of the 50S subunit (bridge B1b), connecting the 2 subunits; these bridges are implicated in subunit movement. Contacts the tRNAs in the A and P-sites. The sequence is that of Small ribosomal subunit protein uS13 from Symbiobacterium thermophilum (strain DSM 24528 / JCM 14929 / IAM 14863 / T).